A 357-amino-acid polypeptide reads, in one-letter code: MADAATIAKLEEGFKKLEAATDCKSLLKKYLSKSIFDSLKAKKTGLGATLLDVIQSGVENLDSGVGIYAPDAEAYSLFAPLFDPIIEDYHKGFKQTDKHPNKDFGDVNQFVNVDPDGKFVISTRVRCGRSLEGYPFNPCLTEAQYKEMEEKVSSTLSGLEGELKGTYYPLAGMTKEVQQKLIDDHFLFKEGDRFLQAANACRYWPVGRGIYHNDNKTFLVWCNEEDHLRIISMQMGGDLGQVYRRLVSAVNDIEKRVPFSHHDRLGFLTFCPTNLGTTIRASVHIKLPKLAANREKLEEVAARYSLQVRGTRGEHTEAEGGVYDISNKRRMGLTEFQAVKEMQDGILELIKIEKEMA.

Residues 9–91 (KLEEGFKKLE…FDPIIEDYHK (83 aa)) form the Phosphagen kinase N-terminal domain. 64 to 68 (GVGIY) is an L-arginine binding site. The 238-residue stretch at 119-356 (FVISTRVRCG…LELIKIEKEM (238 aa)) folds into the Phosphagen kinase C-terminal domain. Residues 122–126 (STRVR) and His-185 each bind ATP. Residue Glu-225 participates in L-arginine binding. Residue Arg-229 participates in ATP binding. Cys-271 is a binding site for L-arginine. ATP is bound by residues 280–284 (RASVH) and 309–314 (RGTRGE). Residue Glu-314 coordinates L-arginine.

This sequence belongs to the ATP:guanido phosphotransferase family. Glycosylated. In terms of tissue distribution, muscle (at protein level).

It catalyses the reaction L-arginine + ATP = N(omega)-phospho-L-arginine + ADP + H(+). Catalyzes the reversible transfer of high energy ATP gamma-phosphate group to L-arginine. This chain is Arginine kinase Pro c 2.0101, found in Procambarus clarkii (Red swamp crayfish).